Here is a 311-residue protein sequence, read N- to C-terminus: Aspartate carbamoyltransferase catalytic subunit (311 aa).

Positions 55 and 56 each coordinate carbamoyl phosphate. Residue Lys-85 coordinates L-aspartate. Positions 106, 135, and 138 each coordinate carbamoyl phosphate. Residues Arg-168 and Arg-230 each coordinate L-aspartate. Carbamoyl phosphate is bound by residues Leu-268 and Pro-269.

Belongs to the aspartate/ornithine carbamoyltransferase superfamily. ATCase family. In terms of assembly, heterododecamer (2C3:3R2) of six catalytic PyrB chains organized as two trimers (C3), and six regulatory PyrI chains organized as three dimers (R2).

The catalysed reaction is carbamoyl phosphate + L-aspartate = N-carbamoyl-L-aspartate + phosphate + H(+). Its pathway is pyrimidine metabolism; UMP biosynthesis via de novo pathway; (S)-dihydroorotate from bicarbonate: step 2/3. In terms of biological role, catalyzes the condensation of carbamoyl phosphate and aspartate to form carbamoyl aspartate and inorganic phosphate, the committed step in the de novo pyrimidine nucleotide biosynthesis pathway. This is Aspartate carbamoyltransferase catalytic subunit from Escherichia coli (strain 55989 / EAEC).